A 361-amino-acid polypeptide reads, in one-letter code: Tyrosine--tRNA ligase (361 aa).

Residues Tyr36, Tyr162, Gln166, Asp169, and Gln184 each coordinate L-tyrosine. Residues 236–240 (KMSKS) carry the 'KMSKS' region motif. Lys239 lines the ATP pocket.

Belongs to the class-I aminoacyl-tRNA synthetase family. TyrS type 4 subfamily. As to quaternary structure, homodimer.

It localises to the cytoplasm. It carries out the reaction tRNA(Tyr) + L-tyrosine + ATP = L-tyrosyl-tRNA(Tyr) + AMP + diphosphate + H(+). Catalyzes the attachment of tyrosine to tRNA(Tyr) in a two-step reaction: tyrosine is first activated by ATP to form Tyr-AMP and then transferred to the acceptor end of tRNA(Tyr). The sequence is that of Tyrosine--tRNA ligase from Saccharolobus islandicus (strain M.14.25 / Kamchatka #1) (Sulfolobus islandicus).